Consider the following 360-residue polypeptide: GDSL esterase/lipase At2g31540 (360 aa).

The signal sequence occupies residues 1–23; the sequence is MSTSKAITLTLFIATTLLAPCNA. The active-site Nucleophile is the serine 42. 2 N-linked (GlcNAc...) asparagine glycosylation sites follow: asparagine 104 and asparagine 326. Active-site residues include aspartate 334 and histidine 337.

The protein belongs to the 'GDSL' lipolytic enzyme family.

It localises to the secreted. The protein is GDSL esterase/lipase At2g31540 of Arabidopsis thaliana (Mouse-ear cress).